The chain runs to 334 residues: Cell division protein ZipA (334 aa).

Topologically, residues 1 to 2 (ME) are periplasmic. The helical transmembrane segment at 3 to 23 (LHIIFLILGGLLIVLLAGFSI) threads the bilayer. Topologically, residues 24 to 334 (YSARREKSRI…DRQAYFARVS (311 aa)) are cytoplasmic.

The protein belongs to the ZipA family. Interacts with FtsZ via their C-terminal domains.

Its subcellular location is the cell inner membrane. Its function is as follows. Essential cell division protein that stabilizes the FtsZ protofilaments by cross-linking them and that serves as a cytoplasmic membrane anchor for the Z ring. Also required for the recruitment to the septal ring of downstream cell division proteins. The protein is Cell division protein ZipA of Haemophilus ducreyi (strain 35000HP / ATCC 700724).